Consider the following 130-residue polypeptide: Small ribosomal subunit protein uS9 (130 aa).

The protein belongs to the universal ribosomal protein uS9 family.

In Xanthomonas oryzae pv. oryzae (strain MAFF 311018), this protein is Small ribosomal subunit protein uS9.